The sequence spans 154 residues: Putative NADPH-dependent 7-cyano-7-deazaguanine reductase (154 aa).

The active-site Proton donor is the Asp-52. Residues 67–69 (VES) and 86–87 (HE) contribute to the substrate site.

Belongs to the GTP cyclohydrolase I family. QueF type 1 subfamily.

It localises to the cytoplasm. It carries out the reaction 7-aminomethyl-7-carbaguanine + 2 NADP(+) = 7-cyano-7-deazaguanine + 2 NADPH + 3 H(+). It participates in tRNA modification; tRNA-queuosine biosynthesis. In terms of biological role, catalyzes the NADPH-dependent reduction of 7-cyano-7-deazaguanine (preQ0) to 7-aminomethyl-7-deazaguanine (preQ1). The protein is Putative NADPH-dependent 7-cyano-7-deazaguanine reductase of Streptococcus pneumoniae (strain ATCC BAA-255 / R6).